The chain runs to 412 residues: Alanyl-tRNA editing protein Aarsd1 (412 aa).

The Zn(2+) site is built by histidine 109 and histidine 113. Residue serine 174 is modified to Phosphoserine. 2 residues coordinate Zn(2+): cysteine 209 and histidine 213.

It belongs to the class-II aminoacyl-tRNA synthetase family. Alax-L subfamily. Requires Zn(2+) as cofactor.

It localises to the cytoplasm. Its function is as follows. Functions in trans to edit the amino acid moiety from incorrectly charged Ser-tRNA(Ala). This Mus musculus (Mouse) protein is Alanyl-tRNA editing protein Aarsd1 (Aarsd1).